The sequence spans 185 residues: Ribosome-recycling factor (185 aa).

Residues 127–158 form a disordered region; the sequence is AVRNTRQDANNKVKKLEKDKEISEDESKKAQE.

It belongs to the RRF family.

Its subcellular location is the cytoplasm. Functionally, responsible for the release of ribosomes from messenger RNA at the termination of protein biosynthesis. May increase the efficiency of translation by recycling ribosomes from one round of translation to another. The sequence is that of Ribosome-recycling factor from Helicobacter pylori (strain G27).